A 473-amino-acid chain; its full sequence is Photosystem II CP43 reaction center protein (473 aa).

The propeptide occupies 1–14 (MKTLYSPRRFYPVE). The residue at position 15 (Thr-15) is an N-acetylthreonine. Thr-15 is subject to Phosphothreonine. Transmembrane regions (helical) follow at residues 69-93 (LFEVAHFIPEKPMYEQGLILLPHLA), 134-155 (LIGPETLEESFPFFGYAWKDRN), 178-200 (KALFFGGIYDTWAPGGGDVRKIT), 255-275 (KPFAWTRRAFVWSGEAYLSYS), and 291-312 (WFNNTAYPSEFYGPTGPEASQA). A [CaMn4O5] cluster-binding site is contributed by Glu-367. A helical membrane pass occupies residues 447–471 (RARAAAAGFEKGIDRDLEPVLFMTP).

Belongs to the PsbB/PsbC family. PsbC subfamily. In terms of assembly, PSII is composed of 1 copy each of membrane proteins PsbA, PsbB, PsbC, PsbD, PsbE, PsbF, PsbH, PsbI, PsbJ, PsbK, PsbL, PsbM, PsbT, PsbX, PsbY, PsbZ, Psb30/Ycf12, at least 3 peripheral proteins of the oxygen-evolving complex and a large number of cofactors. It forms dimeric complexes. The cofactor is Binds multiple chlorophylls and provides some of the ligands for the Ca-4Mn-5O cluster of the oxygen-evolving complex. It may also provide a ligand for a Cl- that is required for oxygen evolution. PSII binds additional chlorophylls, carotenoids and specific lipids..

It is found in the plastid. The protein resides in the chloroplast thylakoid membrane. Its function is as follows. One of the components of the core complex of photosystem II (PSII). It binds chlorophyll and helps catalyze the primary light-induced photochemical processes of PSII. PSII is a light-driven water:plastoquinone oxidoreductase, using light energy to abstract electrons from H(2)O, generating O(2) and a proton gradient subsequently used for ATP formation. This Welwitschia mirabilis (Tree tumbo) protein is Photosystem II CP43 reaction center protein.